The primary structure comprises 41 residues: Large ribosomal subunit protein bL36B (41 aa).

The protein belongs to the bacterial ribosomal protein bL36 family.

In Haemophilus ducreyi (strain 35000HP / ATCC 700724), this protein is Large ribosomal subunit protein bL36B.